The sequence spans 401 residues: Beta-ketoadipyl-CoA thiolase (401 aa).

C90 (acyl-thioester intermediate) is an active-site residue. Active-site proton acceptor residues include H357 and C387.

The protein belongs to the thiolase-like superfamily. Thiolase family.

The enzyme catalyses succinyl-CoA + acetyl-CoA = 3-oxoadipyl-CoA + CoA. The protein operates within aromatic compound metabolism; phenylacetate degradation. Functionally, catalyzes thiolytic cleavage of beta-ketoadipyl-CoA to succinyl-CoA and acetyl-CoA. The polypeptide is Beta-ketoadipyl-CoA thiolase (paaJ) (Escherichia coli).